The chain runs to 35 residues: UPF0387 membrane protein YohO (35 aa).

Residues 6-26 traverse the membrane as a helical segment; that stretch reads IGVIALFLFMALGGIGGVMLA.

The protein belongs to the UPF0387 family.

The protein localises to the cell inner membrane. The protein is UPF0387 membrane protein YohO of Shigella boydii serotype 4 (strain Sb227).